An 862-amino-acid chain; its full sequence is DNA mismatch repair protein MutS (862 aa).

Position 608–615 (608–615 (GPNMAGKS)) interacts with ATP.

This sequence belongs to the DNA mismatch repair MutS family.

Functionally, this protein is involved in the repair of mismatches in DNA. It is possible that it carries out the mismatch recognition step. This protein has a weak ATPase activity. In Borreliella afzelii (strain PKo) (Borrelia afzelii), this protein is DNA mismatch repair protein MutS.